The primary structure comprises 519 residues: Na(+)/H(+) exchange regulatory cofactor NHE-RF3 (519 aa).

The PDZ 1 domain maps to Glu-9 to Asp-90. A phosphoserine mark is found at Ser-108, Ser-148, Ser-192, Ser-250, Ser-334, and Ser-348. PDZ domains are found at residues Arg-134–Glu-215 and Ile-243–Glu-323. Residues Gly-347–His-374 form a disordered region. Over residues Pro-357 to Asp-367 the composition is skewed to polar residues. One can recognise a PDZ 4 domain in the interval Leu-378–Lys-458. Thr-451 is modified (phosphothreonine). A disordered region spans residues Asp-479–Met-519. The span at Pro-482 to His-504 shows a compositional bias: basic and acidic residues. A phosphoserine mark is found at Ser-492, Ser-508, Ser-510, Ser-511, Ser-512, and Ser-514. Residues Ser-505 to Met-519 are compositionally biased toward low complexity.

Belongs to the NHER family. As to quaternary structure, interacts with PDZK1IP1 and ABCC2. Interacts (via PDZ domains 1 and 3) with SCARB1 (C-terminal domain). Forms a heterodimeric complex with NHERF1. Interacts with AKAP2, BCR, CFTR, SLC22A12, SLC22A4, SLC22A5, NHERF2 and SLC17A1. Component of a complex, composed of PDZK1, SYNGAP1, KLHL17 and NMDA receptors. Interacts (via PDZ1 domain) directly with KLHL17; the interaction is important for integrity of actin cytoskeleton structures in neurons. Interacts (via the first PDZ domain) with PTGIR (via non-isoprenylated C-terminus). Interacts (via C-terminal PDZ domain) with SLC26A6 (via C-terminal domain). Interacts (via C-terminal PDZ domain) with SLC9A3 (via C-terminal domain). Interacts (via PDZ domains 1 and 3) with SLC5A8 (via PDZ-binding motif); interaction increases nicotinate transport activity of SLC5A8. Expression is limited to epithelial cells. Expressed in the kidney (brush border of proximal tubule), pancreas, liver, and small intestine. Expressed at a lower level in the adrenal cortex, testis and stomach. Overexpressed in breast, renal and lung carcinomas.

It localises to the membrane. The protein localises to the cell membrane. Functionally, a scaffold protein that connects plasma membrane proteins and regulatory components, regulating their surface expression in epithelial cells apical domains. May be involved in the coordination of a diverse range of regulatory processes for ion transport and second messenger cascades. In complex with NHERF1, may cluster proteins that are functionally dependent in a mutual fashion and modulate the trafficking and the activity of the associated membrane proteins. May play a role in the cellular mechanisms associated with multidrug resistance through its interaction with ABCC2 and PDZK1IP1. May potentiate the CFTR chloride channel activity. Required for normal cell-surface expression of SCARB1. Plays a role in maintaining normal plasma cholesterol levels via its effects on SCARB1. Plays a role in the normal localization and function of the chloride-anion exchanger SLC26A6 to the plasma membrane in the brush border of the proximal tubule of the kidney. May be involved in the regulation of proximal tubular Na(+)-dependent inorganic phosphate cotransport therefore playing an important role in tubule function. This chain is Na(+)/H(+) exchange regulatory cofactor NHE-RF3 (PDZK1), found in Homo sapiens (Human).